The following is a 411-amino-acid chain: MNAKRIRGLLILAAVIAIAVLIWRHFTQTTPAAPGTSEQHAARTSHSENSGSGGGRRAAMRTLAPVQAALTQSASVPHYLSGLGTVTAANTVTLRSRVNGQLMALHFQEGQQVKVGDLLAEIDPRPFQVELTQAQGQLAKDQAALLNTRQDLARYQQLVKTNLISRQELDTQTAAVRQAEGALKADEGAVASAQLQLDYSKITAPISGRIGLKQVDVGNYITSGDTNGIVVITQTYPIDVVFTVPEAEISTILNAQKSGQPPVVEAWDRANQKKLSQGILLSMDNQIDTTTGTIKLKARFDNLDDALFPNQFVNIRMKVDTLKNAVVAPSAAVQMGNDGRFVWILNNKNEVSKRQVTTSIQYGQLVVVTAGLDADVQVVTDGIDRLTEGAKVEIVPSALTEKTPAIAGEKS.

The N-terminal stretch at 1 to 19 (MNAKRIRGLLILAAVIAIA) is a signal peptide. Residues 31–49 (PAAPGTSEQHAARTSHSEN) are compositionally biased toward polar residues. Positions 31–58 (PAAPGTSEQHAARTSHSENSGSGGGRRA) are disordered.

Belongs to the membrane fusion protein (MFP) (TC 8.A.1) family. Part of a tripartite efflux system composed of MdtA, MdtB and MdtC.

It is found in the cell inner membrane. This chain is Multidrug resistance protein MdtA, found in Pectobacterium atrosepticum (strain SCRI 1043 / ATCC BAA-672) (Erwinia carotovora subsp. atroseptica).